A 227-amino-acid polypeptide reads, in one-letter code: Germin-like protein subfamily 1 member 3 (227 aa).

The N-terminal stretch at 1–24 (MKYPFQCFLAKIILLALASSFVSC) is a signal peptide. Cys34 and Cys50 are disulfide-bonded. Residues 64 to 212 (SGLNIPGNTN…AFALDINIVR (149 aa)) form the Cupin type-1 domain. Mn(2+) contacts are provided by His109, His111, and Glu116. The N-linked (GlcNAc...) asparagine glycan is linked to Asn136. His160 lines the Mn(2+) pocket.

It belongs to the germin family. In terms of assembly, oligomer (believed to be a pentamer but probably hexamer).

It localises to the secreted. Its subcellular location is the extracellular space. The protein localises to the apoplast. Its function is as follows. May play a role in plant defense. Probably has no oxalate oxidase activity even if the active site is conserved. The protein is Germin-like protein subfamily 1 member 3 of Arabidopsis thaliana (Mouse-ear cress).